A 476-amino-acid chain; its full sequence is Ataxin-10 (476 aa).

Arginine 10 carries the omega-N-methylarginine modification. Phosphoserine is present on residues serine 13 and serine 78. At threonine 83 the chain carries Phosphothreonine. Serine 431 carries the post-translational modification Phosphoserine.

Belongs to the ataxin-10 family. In terms of assembly, homooligomer. Interacts with GNB2. Interacts with IQCB1. Interacts with OGT. Post-translationally, polyubiquitinated. In terms of processing, phosphorylation at Ser-13 by AURKB promotes the association of ATXN10 with PLK1. Phosphorylation at Ser-78 and Thr-83 by PLK1 may play a role in the regulation of cytokinesis and may stimulate the proteasome-mediated degradation of ATXN10.

It localises to the cytoplasm. Its subcellular location is the perinuclear region. It is found in the midbody. The protein resides in the cytoskeleton. The protein localises to the cilium basal body. It localises to the microtubule organizing center. Its subcellular location is the centrosome. It is found in the centriole. In terms of biological role, may play a role in the regulation of cytokinesis. May play a role in signaling by stimulating protein glycosylation. Induces neuritogenesis by activating the Ras-MAP kinase pathway and is necessary for the survival of cerebellar neurons. Does not appear to play a major role in ciliogenesis. The sequence is that of Ataxin-10 (ATXN10) from Pongo abelii (Sumatran orangutan).